A 382-amino-acid polypeptide reads, in one-letter code: Galactokinase (382 aa).

Substrate is bound at residue 34-37 (EHTD). Residue 124–130 (GAGLSSS) participates in ATP binding. Mg(2+) contacts are provided by Ser130 and Glu162. Asp174 (proton acceptor) is an active-site residue. Tyr223 is a substrate binding site.

It belongs to the GHMP kinase family. GalK subfamily.

It localises to the cytoplasm. The enzyme catalyses alpha-D-galactose + ATP = alpha-D-galactose 1-phosphate + ADP + H(+). It participates in carbohydrate metabolism; galactose metabolism. In terms of biological role, catalyzes the transfer of the gamma-phosphate of ATP to D-galactose to form alpha-D-galactose-1-phosphate (Gal-1-P). The sequence is that of Galactokinase from Salmonella gallinarum (strain 287/91 / NCTC 13346).